Reading from the N-terminus, the 32-residue chain is Cytochrome b6-f complex subunit 7 (32 aa).

A helical membrane pass occupies residues 9 to 27 (AAVFWVLIPVGLAGGALLL).

This sequence belongs to the PetM family. In terms of assembly, the 4 large subunits of the cytochrome b6-f complex are cytochrome b6, subunit IV (17 kDa polypeptide, PetD), cytochrome f and the Rieske protein, while the 4 small subunits are PetG, PetL, PetM and PetN. The complex functions as a dimer.

The protein localises to the cellular thylakoid membrane. Its function is as follows. Component of the cytochrome b6-f complex, which mediates electron transfer between photosystem II (PSII) and photosystem I (PSI), cyclic electron flow around PSI, and state transitions. This chain is Cytochrome b6-f complex subunit 7, found in Prochlorococcus marinus (strain MIT 9303).